We begin with the raw amino-acid sequence, 186 residues long: Ribosome-recycling factor (186 aa).

The protein belongs to the RRF family.

It localises to the cytoplasm. Responsible for the release of ribosomes from messenger RNA at the termination of protein biosynthesis. May increase the efficiency of translation by recycling ribosomes from one round of translation to another. In Brucella abortus (strain S19), this protein is Ribosome-recycling factor.